The chain runs to 243 residues: Nuclear ubiquitous casein and cyclin-dependent kinase substrate 1 (243 aa).

A disordered region spans residues 1 to 243 (MSRPVRNRKV…SEDEAASGED (243 aa)). A Phosphotyrosine modification is found at tyrosine 13. 2 positions are modified to phosphoserine: serine 14 and serine 19. Tyrosine 26 carries the phosphotyrosine modification. Residues 35–51 (KKIRSSPREAKNKRRSG) show a composition bias toward basic residues. A phosphoserine mark is found at serine 54, serine 58, serine 61, serine 73, serine 75, and serine 79. Positions 64-77 (KDVKTKKDDSHSAE) are enriched in basic and acidic residues. The segment covering 91-100 (QQRQAASKAA) has biased composition (low complexity). Positions 111 to 124 (VGSEEEPEEDDEAP) are enriched in acidic residues. Phosphoserine is present on residues serine 113, serine 130, serine 132, and serine 144. Residues 132-145 (SDEDFLMEDDDDSD) show a composition bias toward acidic residues. Residues 149-174 (SKKKNKKMVKKSKPERKEKKMPKPRL) are compositionally biased toward basic residues. The residue at position 179 (threonine 179) is a Phosphothreonine. The residue at position 181 (serine 181) is a Phosphoserine. Residues 197 to 206 (TSKEKTPSPK) show a composition bias toward basic and acidic residues. Phosphothreonine is present on threonine 202. Phosphoserine occurs at positions 204, 214, 223, 229, 234, and 240. Acidic residues predominate over residues 232-243 (EGSEDEAASGED).

Does not interact with RAD51. Post-translationally, phosphorylated in an ATM-dependent manner in response to DNA damage. Phosphorylated by CDK1 and casein kinase.

Its subcellular location is the nucleus. The protein resides in the chromosome. Its function is as follows. Chromatin-associated protein involved in DNA repair by promoting homologous recombination (HR). Binds double-stranded DNA (dsDNA) and secondary DNA structures, such as D-loop structures, but with less affinity than RAD51AP1. The polypeptide is Nuclear ubiquitous casein and cyclin-dependent kinase substrate 1 (Rattus norvegicus (Rat)).